An 87-amino-acid polypeptide reads, in one-letter code: UPF0367 protein P9211_01391 (87 aa).

Belongs to the UPF0367 family.

The polypeptide is UPF0367 protein P9211_01391 (Prochlorococcus marinus (strain MIT 9211)).